The sequence spans 206 residues: Small ribosomal subunit protein uS4 (206 aa).

Residues 96-156 enclose the S4 RNA-binding domain; it reads CRLDNVVYRM…EKAKNQLRIV (61 aa).

It belongs to the universal ribosomal protein uS4 family. As to quaternary structure, part of the 30S ribosomal subunit. Contacts protein S5. The interaction surface between S4 and S5 is involved in control of translational fidelity.

Its function is as follows. One of the primary rRNA binding proteins, it binds directly to 16S rRNA where it nucleates assembly of the body of the 30S subunit. With S5 and S12 plays an important role in translational accuracy. This chain is Small ribosomal subunit protein uS4, found in Pseudomonas fluorescens (strain Pf0-1).